The sequence spans 71 residues: Small ribosomal subunit protein bS18 (71 aa).

It belongs to the bacterial ribosomal protein bS18 family. In terms of assembly, part of the 30S ribosomal subunit. Forms a tight heterodimer with protein bS6.

In terms of biological role, binds as a heterodimer with protein bS6 to the central domain of the 16S rRNA, where it helps stabilize the platform of the 30S subunit. The protein is Small ribosomal subunit protein bS18 of Thermosynechococcus vestitus (strain NIES-2133 / IAM M-273 / BP-1).